The following is a 420-amino-acid chain: UDP-N-acetylglucosamine 1-carboxyvinyltransferase (420 aa).

22–23 (KN) serves as a coordination point for phosphoenolpyruvate. A UDP-N-acetyl-alpha-D-glucosamine-binding site is contributed by R93. C117 acts as the Proton donor in catalysis. C117 carries the 2-(S-cysteinyl)pyruvic acid O-phosphothioketal modification. UDP-N-acetyl-alpha-D-glucosamine-binding positions include 122–126 (RPVDL), D307, and V329.

The protein belongs to the EPSP synthase family. MurA subfamily.

Its subcellular location is the cytoplasm. It carries out the reaction phosphoenolpyruvate + UDP-N-acetyl-alpha-D-glucosamine = UDP-N-acetyl-3-O-(1-carboxyvinyl)-alpha-D-glucosamine + phosphate. Its pathway is cell wall biogenesis; peptidoglycan biosynthesis. Its function is as follows. Cell wall formation. Adds enolpyruvyl to UDP-N-acetylglucosamine. The polypeptide is UDP-N-acetylglucosamine 1-carboxyvinyltransferase (Hahella chejuensis (strain KCTC 2396)).